The primary structure comprises 227 residues: Large ribosomal subunit protein uL1 (227 aa).

Belongs to the universal ribosomal protein uL1 family. In terms of assembly, part of the 50S ribosomal subunit.

Its function is as follows. Binds directly to 23S rRNA. The L1 stalk is quite mobile in the ribosome, and is involved in E site tRNA release. Functionally, protein L1 is also a translational repressor protein, it controls the translation of the L11 operon by binding to its mRNA. The chain is Large ribosomal subunit protein uL1 from Tropheryma whipplei (strain TW08/27) (Whipple's bacillus).